The primary structure comprises 165 residues: Destrin (165 aa).

The residue at position 2 (alanine 2) is an N-acetylalanine. Serine 3 carries the phosphoserine modification. Positions 4-153 constitute an ADF-H domain; it reads GVQVADEVCR…NRTSIAEKLG (150 aa). Residue lysine 19 is modified to N6-acetyllysine. Residues 30 to 34 carry the Nuclear localization signal motif; that stretch reads KKRKK.

Belongs to the actin-binding proteins ADF family. In terms of processing, ISGylated.

Functionally, actin-depolymerizing protein. Severs actin filaments (F-actin) and binds to actin monomers (G-actin). Acts in a pH-independent manner. In Rattus norvegicus (Rat), this protein is Destrin (Dstn).